The primary structure comprises 273 residues: ATP synthase F(1) complex subunit gamma, mitochondrial (273 aa).

An N6-acetyllysine modification is found at lysine 14. Lysine 24 is subject to N6-succinyllysine. Lysine 30 bears the N6-acetyllysine mark. Lysine 90 carries the post-translational modification N6-acetyllysine; alternate. Lysine 90 carries the post-translational modification N6-succinyllysine; alternate. Lysine 113 is subject to N6-acetyllysine. At serine 121 the chain carries Phosphoserine. Lysine 129 carries the N6-acetyllysine; alternate modification. At lysine 129 the chain carries N6-succinyllysine; alternate. Residue lysine 172 is modified to N6-acetyllysine. Lysine 245 carries the N6-succinyllysine modification.

Belongs to the ATPase gamma chain family. In terms of assembly, component of the ATP synthase complex composed at least of ATP5F1A/subunit alpha, ATP5F1B/subunit beta, ATP5MC1/subunit c (homooctomer), MT-ATP6/subunit a, MT-ATP8/subunit 8, ATP5ME/subunit e, ATP5MF/subunit f, ATP5MG/subunit g, ATP5MK/subunit k, ATP5MJ/subunit j, ATP5F1C/subunit gamma, ATP5F1D/subunit delta, ATP5F1E/subunit epsilon, ATP5PF/subunit F6, ATP5PB/subunit b, ATP5PD/subunit d, ATP5PO/subunit OSCP. ATP synthase complex consists of a soluble F(1) head domain (subunits alpha(3) and beta(3)) - the catalytic core - and a membrane F(0) domain - the membrane proton channel (subunits c, a, 8, e, f, g, k and j). These two domains are linked by a central stalk (subunits gamma, delta, and epsilon) rotating inside the F1 region and a stationary peripheral stalk (subunits F6, b, d, and OSCP). Interacts with FLVCR2; this interaction occurs in the absence of heme and is disrupted upon heme binding.

The protein localises to the mitochondrion inner membrane. In terms of biological role, subunit gamma, of the mitochondrial membrane ATP synthase complex (F(1)F(0) ATP synthase or Complex V) that produces ATP from ADP in the presence of a proton gradient across the membrane which is generated by electron transport complexes of the respiratory chain. ATP synthase complex consist of a soluble F(1) head domain - the catalytic core - and a membrane F(1) domain - the membrane proton channel. These two domains are linked by a central stalk rotating inside the F(1) region and a stationary peripheral stalk. During catalysis, ATP synthesis in the catalytic domain of F(1) is coupled via a rotary mechanism of the central stalk subunits to proton translocation. In vivo, can only synthesize ATP although its ATP hydrolase activity can be activated artificially in vitro. With the central stalk subunit delta, is essential for the biogenesis of F(1) catalytic part of the ATP synthase complex namely in the formation of F1 assembly intermediate. The polypeptide is ATP synthase F(1) complex subunit gamma, mitochondrial (Rattus norvegicus (Rat)).